A 439-amino-acid chain; its full sequence is Divalent metal cation transporter MntH (439 aa).

11 helical membrane passes run 32–52, 67–87, 121–141, 144–164, 173–193, 214–234, 261–281, 301–321, 350–370, 371–391, and 406–426; these read GASM…AYMD, GYAL…FQSL, IAAM…LSLL, MPLL…LLLE, LAIG…LFIT, ALLI…LFLH, VVVA…MAAG, APLL…ASGI, AVTM…TQAL, VLSQ…LLWF, and FIAV…AVLI.

Belongs to the NRAMP family.

The protein resides in the cell inner membrane. H(+)-stimulated, divalent metal cation uptake system. The protein is Divalent metal cation transporter MntH of Verminephrobacter eiseniae (strain EF01-2).